The sequence spans 469 residues: Adenosylhomocysteinase (469 aa).

Residues threonine 58, aspartate 133, and glutamate 195 each coordinate substrate. 196-198 (TTT) is an NAD(+) binding site. Positions 225 and 229 each coordinate substrate. NAD(+)-binding positions include asparagine 230, 259 to 264 (GFGDVG), glutamate 282, asparagine 317, 338 to 340 (IGH), and asparagine 383.

The protein belongs to the adenosylhomocysteinase family. NAD(+) is required as a cofactor.

It is found in the cytoplasm. The enzyme catalyses S-adenosyl-L-homocysteine + H2O = L-homocysteine + adenosine. The protein operates within amino-acid biosynthesis; L-homocysteine biosynthesis; L-homocysteine from S-adenosyl-L-homocysteine: step 1/1. Functionally, may play a key role in the regulation of the intracellular concentration of adenosylhomocysteine. The sequence is that of Adenosylhomocysteinase from Rhodopseudomonas palustris (strain ATCC BAA-98 / CGA009).